The primary structure comprises 302 residues: Probable 2-(5''-triphosphoribosyl)-3'-dephosphocoenzyme-A synthase 1 (302 aa).

The protein belongs to the CitG/MdcB family.

The catalysed reaction is 3'-dephospho-CoA + ATP = 2'-(5''-triphospho-alpha-D-ribosyl)-3'-dephospho-CoA + adenine. The sequence is that of Probable 2-(5''-triphosphoribosyl)-3'-dephosphocoenzyme-A synthase 1 from Salmonella typhi.